Here is a 505-residue protein sequence, read N- to C-terminus: Aspartyl/glutamyl-tRNA(Asn/Gln) amidotransferase subunit B (505 aa).

This sequence belongs to the GatB/GatE family. GatB subfamily. In terms of assembly, heterotrimer of A, B and C subunits.

It carries out the reaction L-glutamyl-tRNA(Gln) + L-glutamine + ATP + H2O = L-glutaminyl-tRNA(Gln) + L-glutamate + ADP + phosphate + H(+). The catalysed reaction is L-aspartyl-tRNA(Asn) + L-glutamine + ATP + H2O = L-asparaginyl-tRNA(Asn) + L-glutamate + ADP + phosphate + 2 H(+). Allows the formation of correctly charged Asn-tRNA(Asn) or Gln-tRNA(Gln) through the transamidation of misacylated Asp-tRNA(Asn) or Glu-tRNA(Gln) in organisms which lack either or both of asparaginyl-tRNA or glutaminyl-tRNA synthetases. The reaction takes place in the presence of glutamine and ATP through an activated phospho-Asp-tRNA(Asn) or phospho-Glu-tRNA(Gln). The sequence is that of Aspartyl/glutamyl-tRNA(Asn/Gln) amidotransferase subunit B from Kineococcus radiotolerans (strain ATCC BAA-149 / DSM 14245 / SRS30216).